A 471-amino-acid chain; its full sequence is tRNA-2-methylthio-N(6)-dimethylallyladenosine synthase (471 aa).

One can recognise an MTTase N-terminal domain in the interval 33-151 (KKYMITTYGC…FPELLSRSME (119 aa)). [4Fe-4S] cluster contacts are provided by Cys42, Cys78, Cys112, Cys188, Cys192, and Cys195. One can recognise a Radical SAM core domain in the interval 174-404 (RKYDLKGFIN…LDKVNEISAE (231 aa)). The TRAM domain maps to 407 to 470 (QSYLNKVVEV…TFSLNGEVIQ (64 aa)).

This sequence belongs to the methylthiotransferase family. MiaB subfamily. Monomer. Requires [4Fe-4S] cluster as cofactor.

Its subcellular location is the cytoplasm. It carries out the reaction N(6)-dimethylallyladenosine(37) in tRNA + (sulfur carrier)-SH + AH2 + 2 S-adenosyl-L-methionine = 2-methylsulfanyl-N(6)-dimethylallyladenosine(37) in tRNA + (sulfur carrier)-H + 5'-deoxyadenosine + L-methionine + A + S-adenosyl-L-homocysteine + 2 H(+). Catalyzes the methylthiolation of N6-(dimethylallyl)adenosine (i(6)A), leading to the formation of 2-methylthio-N6-(dimethylallyl)adenosine (ms(2)i(6)A) at position 37 in tRNAs that read codons beginning with uridine. The sequence is that of tRNA-2-methylthio-N(6)-dimethylallyladenosine synthase from Alkaliphilus oremlandii (strain OhILAs) (Clostridium oremlandii (strain OhILAs)).